A 248-amino-acid polypeptide reads, in one-letter code: 3-deoxy-manno-octulosonate cytidylyltransferase (248 aa).

The protein belongs to the KdsB family.

The protein resides in the cytoplasm. The enzyme catalyses 3-deoxy-alpha-D-manno-oct-2-ulosonate + CTP = CMP-3-deoxy-beta-D-manno-octulosonate + diphosphate. It functions in the pathway nucleotide-sugar biosynthesis; CMP-3-deoxy-D-manno-octulosonate biosynthesis; CMP-3-deoxy-D-manno-octulosonate from 3-deoxy-D-manno-octulosonate and CTP: step 1/1. It participates in bacterial outer membrane biogenesis; lipopolysaccharide biosynthesis. Functionally, activates KDO (a required 8-carbon sugar) for incorporation into bacterial lipopolysaccharide in Gram-negative bacteria. This chain is 3-deoxy-manno-octulosonate cytidylyltransferase, found in Escherichia coli O127:H6 (strain E2348/69 / EPEC).